A 342-amino-acid polypeptide reads, in one-letter code: Cyclin-D3-1 (342 aa).

Over residues 322 to 334 (VGSPATNYESSAS) the composition is skewed to polar residues. The interval 322 to 342 (VGSPATNYESSASSKRRRICR) is disordered.

This sequence belongs to the cyclin family. Cyclin D subfamily.

This chain is Cyclin-D3-1 (CYCD3-1), found in Oryza sativa subsp. japonica (Rice).